The chain runs to 459 residues: Putrescine aminotransferase (459 aa).

Pyridoxal 5'-phosphate contacts are provided by residues 150–151 (GT) and Gln-274. At Lys-300 the chain carries N6-(pyridoxal phosphate)lysine. Thr-332 contacts pyridoxal 5'-phosphate.

This sequence belongs to the class-III pyridoxal-phosphate-dependent aminotransferase family. Putrescine aminotransferase subfamily. Pyridoxal 5'-phosphate serves as cofactor.

It catalyses the reaction an alkane-alpha,omega-diamine + 2-oxoglutarate = an omega-aminoaldehyde + L-glutamate. It carries out the reaction putrescine + 2-oxoglutarate = 1-pyrroline + L-glutamate + H2O. The catalysed reaction is cadaverine + 2-oxoglutarate = 5-aminopentanal + L-glutamate. The protein operates within amine and polyamine degradation; putrescine degradation; 4-aminobutanal from putrescine (transaminase route): step 1/1. Functionally, catalyzes the aminotransferase reaction from putrescine to 2-oxoglutarate, leading to glutamate and 4-aminobutanal, which spontaneously cyclizes to form 1-pyrroline. This is the first step in one of two pathways for putrescine degradation, where putrescine is converted into 4-aminobutanoate (gamma-aminobutyrate or GABA) via 4-aminobutanal. Also functions as a cadaverine transaminase in a a L-lysine degradation pathway to succinate that proceeds via cadaverine, glutarate and L-2-hydroxyglutarate. This is Putrescine aminotransferase from Escherichia coli O9:H4 (strain HS).